We begin with the raw amino-acid sequence, 76 residues long: Omega-conotoxin-like TxO5 (76 aa).

A signal peptide spans 1 to 22 (MKLTCMVIVAVLFLTAWTFVTA). Residues 23–50 (ITSNGLENLFPNAHHEMKNPEASKLNKR) constitute a propeptide that is removed on maturation. 3 cysteine pairs are disulfide-bonded: C51-C66, C58-C70, and C65-C75.

This sequence belongs to the conotoxin O1 superfamily. Expressed by the venom duct.

The protein resides in the secreted. In terms of biological role, omega-conotoxins act at presynaptic membranes, they bind and block voltage-gated calcium channels (Cav). This Conus textile (Cloth-of-gold cone) protein is Omega-conotoxin-like TxO5 (TXO5).